Reading from the N-terminus, the 90-residue chain is DNA-directed RNA polymerase subunit Rpo11 (90 aa).

Belongs to the archaeal Rpo11/eukaryotic RPB11/RPC19 RNA polymerase subunit family. Part of the RNA polymerase complex.

The protein resides in the cytoplasm. It catalyses the reaction RNA(n) + a ribonucleoside 5'-triphosphate = RNA(n+1) + diphosphate. Functionally, DNA-dependent RNA polymerase (RNAP) catalyzes the transcription of DNA into RNA using the four ribonucleoside triphosphates as substrates. This Metallosphaera sedula (strain ATCC 51363 / DSM 5348 / JCM 9185 / NBRC 15509 / TH2) protein is DNA-directed RNA polymerase subunit Rpo11.